A 181-amino-acid chain; its full sequence is Ribonuclease HII (181 aa).

In terms of domain architecture, RNase H type-2 spans 1 to 181 (MICGIDEVGR…SLHRKNFKLI (181 aa)). A divalent metal cation-binding residues include Asp-6, Glu-7, and Asp-98.

The protein belongs to the RNase HII family. It depends on Mn(2+) as a cofactor. Mg(2+) is required as a cofactor.

It localises to the cytoplasm. It catalyses the reaction Endonucleolytic cleavage to 5'-phosphomonoester.. Functionally, endonuclease that specifically degrades the RNA of RNA-DNA hybrids. The protein is Ribonuclease HII (rnhB) of Borreliella burgdorferi (strain ATCC 35210 / DSM 4680 / CIP 102532 / B31) (Borrelia burgdorferi).